Reading from the N-terminus, the 163-residue chain is MRLASPRSLFVIAFLGSALLIAIALYMEHVMGLAPCPLCIVQRICVIGFGLVCLVAAIHGPAKVGRRVYAAIAALFVAAGAATAIRQIWLQSVPADQLPSCLPSLEYMMEALPFQEIARLVLHGTAECAEVSWTMLGMSIPEWSLLGFIGMAIVCLWQLLRRD.

Residues 1–9 (MRLASPRSL) lie on the Cytoplasmic side of the membrane. The chain crosses the membrane as a helical span at residues 10–26 (FVIAFLGSALLIAIALY). At 27 to 44 (MEHVMGLAPCPLCIVQRI) the chain is on the periplasmic side. Residues cysteine 36 and cysteine 39 are joined by a disulfide bond. The chain crosses the membrane as a helical span at residues 45–61 (CVIGFGLVCLVAAIHGP). Residues 62–67 (AKVGRR) lie on the Cytoplasmic side of the membrane. Residues 68 to 85 (VYAAIAALFVAAGAATAI) form a helical membrane-spanning segment. The Periplasmic segment spans residues 86-142 (RQIWLQSVPADQLPSCLPSLEYMMEALPFQEIARLVLHGTAECAEVSWTMLGMSIPE). Cysteine 101 and cysteine 128 are oxidised to a cystine. A helical membrane pass occupies residues 143–161 (WSLLGFIGMAIVCLWQLLR). Residues 162–163 (RD) lie on the Cytoplasmic side of the membrane.

It belongs to the DsbB family.

Its subcellular location is the cell inner membrane. In terms of biological role, required for disulfide bond formation in some periplasmic proteins. Acts by oxidizing the DsbA protein. This Stutzerimonas stutzeri (strain A1501) (Pseudomonas stutzeri) protein is Disulfide bond formation protein B.